A 291-amino-acid chain; its full sequence is N-acetylmannosamine kinase (291 aa).

ATP-binding positions include 5 to 12 (AVDIGGTK) and 132 to 139 (GVGGGIVV). Zn(2+) is bound by residues His156, Cys166, Cys168, and Cys173.

The protein belongs to the ROK (NagC/XylR) family. NanK subfamily. As to quaternary structure, homodimer.

The enzyme catalyses an N-acyl-D-mannosamine + ATP = an N-acyl-D-mannosamine 6-phosphate + ADP + H(+). Its pathway is amino-sugar metabolism; N-acetylneuraminate degradation; D-fructose 6-phosphate from N-acetylneuraminate: step 2/5. Functionally, catalyzes the phosphorylation of N-acetylmannosamine (ManNAc) to ManNAc-6-P. This Escherichia coli O6:H1 (strain CFT073 / ATCC 700928 / UPEC) protein is N-acetylmannosamine kinase (nanK2).